A 295-amino-acid chain; its full sequence is Probable isochorismatase (295 aa).

Positions 1–21 are disordered; sequence MGIPKIAGYPLPTPAEFPDNR. A Carrier domain is found at 207 to 286; sequence EIRSQKPLTL…EWWLVIEQAR (80 aa). S247 is modified (O-(pantetheine 4'-phosphoryl)serine).

The protein belongs to the isochorismatase family. The cofactor is pantetheine 4'-phosphate.

It carries out the reaction isochorismate + H2O = (2S,3S)-2,3-dihydroxy-2,3-dihydrobenzoate + pyruvate. It participates in siderophore biosynthesis; vulnibactin biosynthesis. Its function is as follows. Involved in the biosynthesis of the catechol siderophore vulnibactin. Vulnibactin is a chelating compound involved in transporting iron from the bacterial environment into the cell cytoplasm. The chain is Probable isochorismatase (venB) from Vibrio vulnificus (strain CMCP6).